We begin with the raw amino-acid sequence, 518 residues long: Retinal dehydrogenase 2 (518 aa).

Y168 carries the phosphotyrosine modification. NAD(+)-binding positions include 184-186, 210-213, and 264-266; these read IPW, KPAE, and STE. E286 (proton acceptor) is an active-site residue. C320 (nucleophile) is an active-site residue. S351 is subject to Phosphoserine. NAD(+) is bound by residues 366 to 370 and E417; that span reads KQYNK.

The protein belongs to the aldehyde dehydrogenase family. Homotetramer. As to expression, found in testis and less abundantly in lung, brain, heart, liver and kidney.

The protein resides in the cytoplasm. It catalyses the reaction retinal + NAD(+) + H2O = retinoate + NADH + 2 H(+). The catalysed reaction is all-trans-retinal + NAD(+) + H2O = all-trans-retinoate + NADH + 2 H(+). It carries out the reaction all-trans-13,14-dihydroretinal + NAD(+) + H2O = all-trans-13,14-dihydroretinoate + NADH + 2 H(+). It participates in cofactor metabolism; retinol metabolism. In terms of biological role, catalyzes the NAD-dependent oxidation of aldehyde substrates, such as all-trans-retinal and all-trans-13,14-dihydroretinal, to their corresponding carboxylic acids, all-trans-retinoate and all-trans-13,14-dihydroretinoate, respectively. Retinoate signaling is critical for the transcriptional control of many genes, for instance it is crucial for initiation of meiosis in both male and female. Recognizes retinal as substrate, both in its free form and when bound to cellular retinol-binding protein. Lacks activity with benzaldehyde, acetaldehyde and octanal. Displays complete lack of activity with citral. This Rattus norvegicus (Rat) protein is Retinal dehydrogenase 2 (Aldh1a2).